Here is an 826-residue protein sequence, read N- to C-terminus: Ubiquitin carboxyl-terminal hydrolase 16 (826 aa).

Residues 22-142 (PMCRHIRKGL…QVVDYVRKQA (121 aa)) form a UBP-type zinc finger. Cys24, His26, Cys48, Cys51, Cys74, Cys77, Cys82, His90, His94, His103, Cys116, and Cys119 together coordinate Zn(2+). Residue Lys140 forms a Glycyl lysine isopeptide (Lys-Gly) (interchain with G-Cter in SUMO2) linkage. The disordered stretch occupies residues 146–190 (TPKPAEKDNGNIELENKKLEKESKNEQEREKKENMAKENPPMNSP). Basic and acidic residues predominate over residues 149 to 181 (PAEKDNGNIELENKKLEKESKNEQEREKKENMA). The residue at position 189 (Ser189) is a Phosphoserine. Residues 196–825 (KGLSNLGNTC…QAYLLFYERI (630 aa)) form the USP domain. Catalysis depends on Cys205, which acts as the Nucleophile. Over residues 394–408 (SGKKSVNDKNLKKTM) the composition is skewed to basic and acidic residues. Residues 394-460 (SGKKSVNDKN…AKNQRRQQKI (67 aa)) form a disordered region. Residues 409–420 (EDEDQDSEEEKD) are compositionally biased toward acidic residues. Ser415 bears the Phosphoserine mark. Basic and acidic residues predominate over residues 421 to 430 (NDSYIKERSD). A compositionally biased stretch (basic residues) spans 438–458 (HLQKKAKKQAKKQAKNQRRQQ). Residue Ser552 is modified to Phosphoserine. Thr557 carries the phosphothreonine modification. The active-site Proton acceptor is the His761.

Belongs to the peptidase C19 family. USP16 subfamily. As to quaternary structure, homotetramer. Associates with late pre-40S ribosomes. Interacts with CEP78; promoting deubiquitination of tektins. Post-translationally, phosphorylated at the onset of mitosis and dephosphorylated during the metaphase/anaphase transition. Phosphorylation by AURKB enhances the deubiquitinase activity.

It is found in the nucleus. It carries out the reaction Thiol-dependent hydrolysis of ester, thioester, amide, peptide and isopeptide bonds formed by the C-terminal Gly of ubiquitin (a 76-residue protein attached to proteins as an intracellular targeting signal).. Functionally, specifically deubiquitinates 'Lys-120' of histone H2A (H2AK119Ub), a specific tag for epigenetic transcriptional repression, thereby acting as a coactivator. Deubiquitination of histone H2A is a prerequisite for subsequent phosphorylation at 'Ser-11' of histone H3 (H3S10ph), and is required for chromosome segregation when cells enter into mitosis. In resting B- and T-lymphocytes, phosphorylation by AURKB leads to enhance its activity, thereby maintaining transcription in resting lymphocytes. Regulates Hox gene expression via histone H2A deubiquitination. Prefers nucleosomal substrates. Does not deubiquitinate histone H2B. Also deubiquitinates non-histone proteins, such as ribosomal protein RPS27A: deubiquitination of monoubiquitinated RPS27A promotes maturation of the 40S ribosomal subunit. Also mediates deubiquitination of tektin proteins (TEKT1, TEKT2, TEK3, TEKT4 and TEKT5), promoting their stability. This Macaca fascicularis (Crab-eating macaque) protein is Ubiquitin carboxyl-terminal hydrolase 16.